Here is a 447-residue protein sequence, read N- to C-terminus: ATP-dependent protease ATPase subunit HslU (447 aa).

ATP contacts are provided by residues isoleucine 18, 60 to 65 (GVGKTE), aspartate 259, glutamate 325, and arginine 397.

The protein belongs to the ClpX chaperone family. HslU subfamily. As to quaternary structure, a double ring-shaped homohexamer of HslV is capped on each side by a ring-shaped HslU homohexamer. The assembly of the HslU/HslV complex is dependent on binding of ATP.

It is found in the cytoplasm. Its function is as follows. ATPase subunit of a proteasome-like degradation complex; this subunit has chaperone activity. The binding of ATP and its subsequent hydrolysis by HslU are essential for unfolding of protein substrates subsequently hydrolyzed by HslV. HslU recognizes the N-terminal part of its protein substrates and unfolds these before they are guided to HslV for hydrolysis. The chain is ATP-dependent protease ATPase subunit HslU from Burkholderia ambifaria (strain MC40-6).